We begin with the raw amino-acid sequence, 360 residues long: Protein Wnt-2 (360 aa).

Residues 1–25 (MNAPLAGIWPWLPLLLTWLAPEVSS) form the signal peptide. 11 cysteine pairs are disulfide-bonded: Cys76–Cys87, Cys127–Cys135, Cys137–Cys157, Cys206–Cys220, Cys208–Cys215, Cys278–Cys309, Cys294–Cys304, Cys308–Cys348, Cys324–Cys339, Cys326–Cys336, and Cys331–Cys332. Residue Ser212 is the site of O-palmitoleoyl serine; by PORCN attachment. N-linked (GlcNAc...) asparagine glycosylation occurs at Asn295.

Belongs to the Wnt family. Post-translationally, palmitoleoylation is required for efficient binding to frizzled receptors. Depalmitoleoylation leads to Wnt signaling pathway inhibition.

Its subcellular location is the secreted. It is found in the extracellular space. It localises to the extracellular matrix. Ligand for members of the frizzled family of seven transmembrane receptors. Functions in the canonical Wnt signaling pathway that results in activation of transcription factors of the TCF/LEF family. Functions as a upstream regulator of FGF10 expression. Plays an important role in embryonic lung development. May contribute to embryonic brain development by regulating the proliferation of dopaminergic precursors and neurons. This chain is Protein Wnt-2 (WNT2), found in Loxodonta africana (African elephant).